A 237-amino-acid polypeptide reads, in one-letter code: Protein GrpE (237 aa).

Disordered stretches follow at residues 1 to 52 (MSGD…RLQQ) and 200 to 237 (KVSMGPGPQSGASPSSAQPNDDSTATFQGEADPAQPGV). The segment covering 27–40 (ASINSDEGQSSAQS) has biased composition (polar residues). The segment covering 204-218 (GPGPQSGASPSSAQP) has biased composition (low complexity).

It belongs to the GrpE family. As to quaternary structure, homodimer.

Its subcellular location is the cytoplasm. In terms of biological role, participates actively in the response to hyperosmotic and heat shock by preventing the aggregation of stress-denatured proteins, in association with DnaK and GrpE. It is the nucleotide exchange factor for DnaK and may function as a thermosensor. Unfolded proteins bind initially to DnaJ; upon interaction with the DnaJ-bound protein, DnaK hydrolyzes its bound ATP, resulting in the formation of a stable complex. GrpE releases ADP from DnaK; ATP binding to DnaK triggers the release of the substrate protein, thus completing the reaction cycle. Several rounds of ATP-dependent interactions between DnaJ, DnaK and GrpE are required for fully efficient folding. The sequence is that of Protein GrpE from Prochlorococcus marinus (strain MIT 9313).